The following is a 1042-amino-acid chain: Sarcoplasmic/endoplasmic reticulum calcium ATPase 2 (1042 aa).

The Cytoplasmic portion of the chain corresponds to 1–48; that stretch reads MENAHTKTVEEVLGHFGVNESTGLSLEQVKKLKERWGSNELPAEEGKT. Ser38 is modified (phosphoserine). Residues 49–69 traverse the membrane as a helical segment; the sequence is LLELVIEQFEDLLVRILLLAA. Residues 70–89 are Lumenal-facing; sequence CISFVLAWFEEGEETITAFV. The chain crosses the membrane as a helical span at residues 90 to 110; the sequence is EPFVILLILVANAIVGVWQER. Topologically, residues 111 to 253 are cytoplasmic; the sequence is NAENAIEALK…QERTPLQQKL (143 aa). Residues 254–273 traverse the membrane as a helical segment; sequence DEFGEQLSKVISLICIAVWI. The Lumenal portion of the chain corresponds to 274 to 295; it reads INIGHFNDPVHGGSWIRGAIYY. A 3'-nitrotyrosine mark is found at Tyr294 and Tyr295. A helical transmembrane segment spans residues 296–313; the sequence is FKIAVALAVAAIPEGLPA. 4 residues coordinate Ca(2+): Val304, Ala305, Ile307, and Glu309. Over 314 to 756 the chain is Cytoplasmic; the sequence is VITTCLALGT…EEGRAIYNNM (443 aa). The active-site 4-aspartylphosphate intermediate is the Asp351. Mg(2+) is bound by residues Asp351 and Thr353. Thr353 is a binding site for ATP. At Thr441 the chain carries Phosphothreonine. ATP-binding residues include Glu442, Arg489, and Lys514. Position 531 is a phosphoserine (Ser531). Residue Arg559 coordinates ATP. The segment at 575–594 is interaction with HAX1; that stretch reads MHLKDSANFIKYETNLTFVG. A Phosphoserine modification is found at Ser580. 3 residues coordinate ATP: Thr624, Gly625, and Asp626. Residue Ser663 is modified to Phosphoserine. Residues Arg677 and Lys683 each contribute to the ATP site. Asp702 provides a ligand contact to Mg(2+). Position 705 (Asn705) interacts with ATP. A helical transmembrane segment spans residues 757–776; that stretch reads KQFIRYLISSNVGEVVCIFL. Ca(2+)-binding residues include Asn767 and Glu770. Over 777–786 the chain is Lumenal; it reads TAALGFPEAL. The helical transmembrane segment at 787 to 807 threads the bilayer; it reads IPVQLLWVNLVTDGLPATALG. An interaction with PLN region spans residues 787–807; the sequence is IPVQLLWVNLVTDGLPATALG. Residues 788-1042 are interaction with TMEM64 and PDIA3; sequence PVQLLWVNLV…DTNFSDLLWS (255 aa). Ca(2+) contacts are provided by Asn795, Thr798, and Asp799. At 808–827 the chain is on the cytoplasmic side; it reads FNPPDLDIMNKPPRNPKEPL. A helical transmembrane segment spans residues 828 to 850; that stretch reads ISGWLFFRYLAIGCYVGAATVGA. Residues 851-896 lie on the Lumenal side of the membrane; it reads AAWWFIAADGGPRVSFYQLSHFLQCKEDNPDFEGVDCAIFESPYPM. A disulfide bridge connects residues Cys875 and Cys887. The helical transmembrane segment at 897–916 threads the bilayer; sequence TMALSVLVTIEMCNALNSLS. Residue Glu907 participates in Ca(2+) binding. The Cytoplasmic portion of the chain corresponds to 917–929; it reads ENQSLLRMPPWEN. A helical membrane pass occupies residues 930-948; sequence IWLVGSICLSMSLHFLILY. The tract at residues 931 to 942 is interaction with PLN; sequence WLVGSICLSMSL. Over 949–963 the chain is Lumenal; sequence VEPLPLIFQITPLNV. Residues 964-984 form a helical membrane-spanning segment; the sequence is TQWLMVLKISLPVILMDETLK. Residues 985 to 1042 are Cytoplasmic-facing; it reads FVARNYLEPGKECVQPAPQSCSLWACTEGVSWPFVLLIVPLVMWVYSTDTNFSDLLWS.

The protein belongs to the cation transport ATPase (P-type) (TC 3.A.3) family. Type IIA subfamily. Interacts with sarcolipin (SLN); the interaction inhibits ATP2A2 Ca(2+) affinity. Interacts with phospholamban (PLN); the interaction inhibits ATP2A2 Ca(2+) affinity. Interacts with myoregulin (MRLN). Interacts with ARLN and ERLN; the interactions inhibit ATP2A2 Ca(2+) affinity. Interacts with SRTIT1/DWORF; the interaction results in activation of ATP2A2. Interacts with the monomeric forms of SLN, PLN, ARLN, ERLN and STRI1/DWORF. Interacts with HAX1. Interacts with S100A8 and S100A9. Interacts with SLC35G1 and STIM1. Interacts with TMEM203. Interacts with TMEM64 and PDIA3. Interacts with TMX1. Interacts with TMX2. Interacts with VMP1; VMP1 competes with PLN and SLN to prevent them from forming an inhibitory complex with ATP2A2. Interacts with ULK1. Interacts with TUNAR. Interacts with FLVCR2; this interaction occurs in the absence of heme and promotes ATP2A2 proteasomal degradation; this complex is dissociated upon heme binding. Interacts with FNIP1. In terms of assembly, interacts with TRAM2 (via C-terminus). Mg(2+) serves as cofactor. Nitrated under oxidative stress. Nitration on the two tyrosine residues inhibits catalytic activity. Post-translationally, serotonylated on Gln residues by TGM2 in response to hypoxia, leading to its inactivation. As to expression, isoform 2 is highly expressed in heart and slow twitch skeletal muscle. Isoform 1 is widely expressed.

The protein resides in the endoplasmic reticulum membrane. It is found in the sarcoplasmic reticulum membrane. It catalyses the reaction Ca(2+)(in) + ATP + H2O = Ca(2+)(out) + ADP + phosphate + H(+). Has different conformational states with differential Ca2+ affinity. The E1 conformational state (active form) shows high Ca(2+) affinity, while the E2 state exhibits low Ca(2+) affinity. Binding of ATP allosterically increases its affinity for subsequent binding of Ca2+. Reversibly inhibited by phospholamban (PLN) at low calcium concentrations. PLN inhibits ATP2A2 Ca(2+) affinity by disrupting its allosteric activation by ATP. Inhibited by sarcolipin (SLN) and myoregulin (MRLN). The inhibition is blocked by VMP1. Enhanced by STRIT1/DWORF; STRIT1 increases activity by displacing sarcolipin (SLN), phospholamban (PLN) and myoregulin (MRLN). Stabilizes SERCA2 in its E2 state. Its function is as follows. This magnesium-dependent enzyme catalyzes the hydrolysis of ATP coupled with the translocation of calcium from the cytosol to the sarcoplasmic reticulum lumen. Involved in autophagy in response to starvation. Upon interaction with VMP1 and activation, controls ER-isolation membrane contacts for autophagosome formation. Also modulates ER contacts with lipid droplets, mitochondria and endosomes. In coordination with FLVCR2 mediates heme-stimulated switching from mitochondrial ATP synthesis to thermogenesis. In terms of biological role, involved in the regulation of the contraction/relaxation cycle. Acts as a regulator of TNFSF11-mediated Ca(2+) signaling pathways via its interaction with TMEM64 which is critical for the TNFSF11-induced CREB1 activation and mitochondrial ROS generation necessary for proper osteoclast generation. Association between TMEM64 and SERCA2 in the ER leads to cytosolic Ca(2+) spiking for activation of NFATC1 and production of mitochondrial ROS, thereby triggering Ca(2+) signaling cascades that promote osteoclast differentiation and activation. This chain is Sarcoplasmic/endoplasmic reticulum calcium ATPase 2 (ATP2A2), found in Oryctolagus cuniculus (Rabbit).